The sequence spans 415 residues: Beta-2 adrenergic receptor (415 aa).

Topologically, residues Met-1 to Val-34 are extracellular. N-linked (GlcNAc...) asparagine glycosylation is found at Asn-6 and Asn-15. The helical transmembrane segment at Gly-35 to Ile-58 threads the bilayer. Residues Ala-59–Phe-71 are Cytoplasmic-facing. The chain crosses the membrane as a helical span at residues Ile-72 to Leu-95. Residues Met-96 to Cys-106 lie on the Extracellular side of the membrane. Cystine bridges form between Cys-106/Cys-191 and Cys-184/Cys-190. Residues Glu-107–Val-129 traverse the membrane as a helical segment. Residues Asp-130–Ala-150 are Cytoplasmic-facing. Tyr-141 carries the post-translational modification Phosphotyrosine. A helical transmembrane segment spans residues Arg-151–Tyr-174. Over Arg-175 to Asn-196 the chain is Extracellular. Residues Gln-197–Ser-220 form a helical membrane-spanning segment. Residues Arg-221–Thr-274 lie on the Cytoplasmic side of the membrane. The residue at position 246 (Ser-246) is a Phosphoserine. 2 positions are modified to phosphoserine; by PKA: Ser-261 and Ser-262. Cys-265 carries the S-palmitoyl cysteine lipid modification. A helical membrane pass occupies residues Leu-275–Ile-298. Topologically, residues Gln-299 to Lys-305 are extracellular. A helical membrane pass occupies residues Glu-306 to Ser-329. Residues Pro-330–Leu-415 lie on the Cytoplasmic side of the membrane. Cys-341 carries the S-palmitoyl cysteine lipid modification. 2 positions are modified to phosphoserine; by PKA: Ser-345 and Ser-346. Ser-355 carries the phosphoserine; by BARK modification. The disordered stretch occupies residues Ser-379–Leu-415. 2 positions are modified to 4-hydroxyproline: Pro-387 and Pro-397. Over residues Thr-395–Leu-415 the composition is skewed to polar residues. A PDZ-binding motif is present at residues Asp-412–Leu-415.

The protein belongs to the G-protein coupled receptor 1 family. Adrenergic receptor subfamily. ADRB2 sub-subfamily. Binds NHERF1 and GPRASP1. Interacts with ARRB1 and ARRB2. Interacts with SRC. Interacts with USP20 and USP33. Interacts with VHL; the interaction, which is increased on hydroxylation of ADRB2, ubiquitinates ADRB2 leading to its degradation. Interacts with EGLN3; the interaction hydroxylates ADRB2 facilitating VHL-E3 ligase-mediated ubiquitination. Interacts (via PDZ-binding motif) with SNX27 (via PDZ domain); the interaction is required when endocytosed to prevent degradation in lysosomes and promote recycling to the plasma membrane. Interacts with CNIH4. Interacts with ARRDC3. Interacts with NEDD4. Interacts with MARCHF2. In terms of processing, palmitoylated; may reduce accessibility of Ser-345 and Ser-346 by anchoring Cys-341 to the plasma membrane. Agonist stimulation promotes depalmitoylation and further allows Ser-345 and Ser-346 phosphorylation. Post-translationally, phosphorylated by PKA and BARK upon agonist stimulation, which mediates homologous desensitization of the receptor. PKA-mediated phosphorylation seems to facilitate phosphorylation by BARK. Phosphorylation of Tyr-141 is induced by insulin and leads to supersensitization of the receptor. In terms of processing, polyubiquitinated. Agonist-induced ubiquitination leads to sort internalized receptors to the lysosomes for degradation. Deubiquitination by USP20 and USP33, leads to ADRB2 recycling and resensitization after prolonged agonist stimulation. USP20 and USP33 are constitutively associated and are dissociated immediately after agonist stimulation. Ubiquitination by the VHL-E3 ligase complex is oxygen-dependent. Post-translationally, hydroxylation by EGLN3 occurs only under normoxia and increases the interaction with VHL and the subsequent ubiquitination and degradation of ADRB2. Palmitoylated. Mainly palmitoylated at Cys-341. Palmitoylation may reduce accessibility of phosphorylation sites by anchoring the receptor to the plasma membrane. Agonist stimulation promotes depalmitoylation and further allows Ser-345 and Ser-346 phosphorylation. Also undergoes transient, ligand-induced palmitoylation at Cys-265 probably by ZDHHC9, ZDHHC14 and ZDHHC18 within the Golgi. Palmitoylation at Cys-265 requires phosphorylation by PKA and receptor internalization and stabilizes the receptor. Could be depalmitoylated by LYPLA1 at the plasma membrane.

The protein resides in the cell membrane. The protein localises to the early endosome. It is found in the golgi apparatus. Its function is as follows. Beta-adrenergic receptors mediate the catecholamine-induced activation of adenylate cyclase through the action of G proteins. The beta-2-adrenergic receptor binds epinephrine with an approximately 30-fold greater affinity than it does norepinephrine. The polypeptide is Beta-2 adrenergic receptor (ADRB2) (Canis lupus familiaris (Dog)).